The following is an 86-amino-acid chain: Small ribosomal subunit protein bS20 (86 aa).

Positions Met-1–Lys-25 are disordered.

Belongs to the bacterial ribosomal protein bS20 family.

In terms of biological role, binds directly to 16S ribosomal RNA. In Exiguobacterium sp. (strain ATCC BAA-1283 / AT1b), this protein is Small ribosomal subunit protein bS20.